The following is a 167-amino-acid chain: NAD(P)H-quinone oxidoreductase subunit I, chloroplastic (167 aa).

4Fe-4S ferredoxin-type domains lie at G55–K84 and L95–E124. Residues C64, C67, C70, C74, C104, C107, C110, and C114 each coordinate [4Fe-4S] cluster.

This sequence belongs to the complex I 23 kDa subunit family. NDH is composed of at least 16 different subunits, 5 of which are encoded in the nucleus. It depends on [4Fe-4S] cluster as a cofactor.

The protein localises to the plastid. It is found in the chloroplast thylakoid membrane. It catalyses the reaction a plastoquinone + NADH + (n+1) H(+)(in) = a plastoquinol + NAD(+) + n H(+)(out). The enzyme catalyses a plastoquinone + NADPH + (n+1) H(+)(in) = a plastoquinol + NADP(+) + n H(+)(out). Its function is as follows. NDH shuttles electrons from NAD(P)H:plastoquinone, via FMN and iron-sulfur (Fe-S) centers, to quinones in the photosynthetic chain and possibly in a chloroplast respiratory chain. The immediate electron acceptor for the enzyme in this species is believed to be plastoquinone. Couples the redox reaction to proton translocation, and thus conserves the redox energy in a proton gradient. This is NAD(P)H-quinone oxidoreductase subunit I, chloroplastic from Arabis hirsuta (Hairy rock-cress).